Reading from the N-terminus, the 199-residue chain is Large ribosomal subunit protein bL25 (199 aa).

It belongs to the bacterial ribosomal protein bL25 family. CTC subfamily. As to quaternary structure, part of the 50S ribosomal subunit; part of the 5S rRNA/L5/L18/L25 subcomplex. Contacts the 5S rRNA. Binds to the 5S rRNA independently of L5 and L18.

In terms of biological role, this is one of the proteins that binds to the 5S RNA in the ribosome where it forms part of the central protuberance. In Pseudomonas fluorescens (strain ATCC BAA-477 / NRRL B-23932 / Pf-5), this protein is Large ribosomal subunit protein bL25.